The chain runs to 199 residues: Cilia- and flagella-associated protein 20 (199 aa).

The protein belongs to the CFAP20 family. In terms of tissue distribution, expressed in spermatocytes and chordotonal organs in sensory neurons of the antenna.

The protein resides in the nucleus. The protein localises to the nucleolus. It localises to the cell projection. It is found in the cilium. Its subcellular location is the cytoplasm. The protein resides in the cytoskeleton. The protein localises to the microtubule organizing center. It localises to the centrosome. It is found in the centriole. Its subcellular location is the flagellum. The protein resides in the cilium axoneme. In terms of biological role, cilium- and flagellum-specific protein that plays a role in axonemal structure organization and motility. Microtubule inner protein (MIP) part of the dynein-decorated doublet microtubules (DMTs) in cilia axoneme, which is required for motile cilia beating. Involved in the regulation of the size and morphology of cilia. Required for sperm individualization, differentiation of the sperm flagellum and tubulin polyglycylation of axonemal microtubules. In Drosophila melanogaster (Fruit fly), this protein is Cilia- and flagella-associated protein 20.